The primary structure comprises 148 residues: Large ribosomal subunit protein bL9 (148 aa).

Belongs to the bacterial ribosomal protein bL9 family.

Functionally, binds to the 23S rRNA. The chain is Large ribosomal subunit protein bL9 from Caldicellulosiruptor bescii (strain ATCC BAA-1888 / DSM 6725 / KCTC 15123 / Z-1320) (Anaerocellum thermophilum).